We begin with the raw amino-acid sequence, 253 residues long: Phosphoadenosine 5'-phosphosulfate reductase (253 aa).

Cysteine 242 serves as the catalytic Nucleophile; cysteine thiosulfonate intermediate.

It belongs to the PAPS reductase family. CysH subfamily.

The protein localises to the cytoplasm. The enzyme catalyses [thioredoxin]-disulfide + sulfite + adenosine 3',5'-bisphosphate + 2 H(+) = [thioredoxin]-dithiol + 3'-phosphoadenylyl sulfate. It participates in sulfur metabolism; hydrogen sulfide biosynthesis; sulfite from sulfate: step 3/3. In terms of biological role, catalyzes the formation of sulfite from phosphoadenosine 5'-phosphosulfate (PAPS) using thioredoxin as an electron donor. In Vibrio cholerae serotype O1 (strain ATCC 39541 / Classical Ogawa 395 / O395), this protein is Phosphoadenosine 5'-phosphosulfate reductase.